A 149-amino-acid chain; its full sequence is Protein Rv2250A (149 aa).

The sequence is that of Protein Rv2250A from Mycobacterium tuberculosis (strain ATCC 25618 / H37Rv).